Here is a 762-residue protein sequence, read N- to C-terminus: Molybdenum cofactor sulfurase 2 (762 aa).

An N6-(pyridoxal phosphate)lysine modification is found at Lys-234. The active site involves Cys-400. The MOSC domain maps to 590-738 (AWISKALRMP…LECGSILEPV (149 aa)).

It belongs to the class-V pyridoxal-phosphate-dependent aminotransferase family. MOCOS subfamily. Requires pyridoxal 5'-phosphate as cofactor.

The enzyme catalyses Mo-molybdopterin + L-cysteine + AH2 = thio-Mo-molybdopterin + L-alanine + A + H2O. Sulfurates the molybdenum cofactor. Sulfation of molybdenum is essential for xanthine dehydrogenase (XDH) and aldehyde oxidase (ADO) enzymes in which molybdenum cofactor is liganded by 1 oxygen and 1 sulfur atom in active form. This chain is Molybdenum cofactor sulfurase 2, found in Aedes aegypti (Yellowfever mosquito).